The sequence spans 753 residues: Rsm22-cox11 tandem protein 1, mitochondrial (753 aa).

The transit peptide at 1–39 (MPILTCRYKILFLYNLRNCFTFQNQRCLIPYGTTTTIRW) directs the protein to the mitochondrion. Cysteine 323, cysteine 329, cysteine 342, and cysteine 430 together coordinate [4Fe-4S] cluster. A helical membrane pass occupies residues 571 to 591 (IYYLVAISIFALGLTYAAVPL). At 592–753 (YRLFCSKTGY…TNGNLLTKLN (162 aa)) the chain is on the mitochondrial intermembrane side.

The protein in the N-terminal section; belongs to the methyltransferase superfamily. Rsm22 family. In the C-terminal section; belongs to the COX11/CtaG family. Associates with the mitochondrial ribosome (mitoribosome). Only transiently interacts with the mitoribosome. In terms of processing, specific enzymatic cleavages in vivo by mitochondrial processing peptidase (MPP) yield mature proteins including rsm22-1 and cox11-1.

Its subcellular location is the mitochondrion. It localises to the mitochondrion inner membrane. In terms of biological role, mitochondrial ribosome (mitoribosome) assembly factor. Binds at the interface of the head and body domains of the mitochondrial small ribosomal subunit (mt-SSU), occluding the mRNA channel and preventing compaction of the head domain towards the body. Probable inactive methyltransferase: retains the characteristic folding and ability to bind S-adenosyl-L-methionine, but it probably lost its methyltransferase activity. Its function is as follows. Exerts its effect at some terminal stage of cytochrome c oxidase synthesis, probably by being involved in the insertion of the copper B into subunit I. This chain is Rsm22-cox11 tandem protein 1, mitochondrial (cox1101), found in Schizosaccharomyces pombe (strain 972 / ATCC 24843) (Fission yeast).